The primary structure comprises 447 residues: Thiol-specific monooxygenase (447 aa).

Residues 13-17, Glu-38, 46-47, 91-92, and 137-138 contribute to the FAD site; these read GAGPS, VW, NT, and DV. Position 90-91 (90-91) interacts with NADP(+); that stretch reads TN. Position 223–226 (223–226) interacts with NADP(+); it reads SAND.

It belongs to the FMO family. Monomer. FAD serves as cofactor.

Functionally, flavin-dependent oxidation of thiol-containing compounds. Probably required for the correct folding of disulfide-bonded proteins. The polypeptide is Thiol-specific monooxygenase (fmo1) (Schizosaccharomyces pombe (strain 972 / ATCC 24843) (Fission yeast)).